Reading from the N-terminus, the 214-residue chain is Pyridoxine/pyridoxamine 5'-phosphate oxidase (214 aa).

Residues 8 to 11 (RINY) and K66 each bind substrate. Residues 61 to 66 (RIVLIK), 76 to 77 (FT), R82, K83, and Q105 contribute to the FMN site. 3 residues coordinate substrate: Y123, R127, and S131. FMN is bound by residues 140–141 (QS) and W184. Substrate is bound at residue 190 to 192 (RLH). Residue R194 participates in FMN binding.

The protein belongs to the pyridoxamine 5'-phosphate oxidase family. Homodimer. FMN serves as cofactor.

The catalysed reaction is pyridoxamine 5'-phosphate + O2 + H2O = pyridoxal 5'-phosphate + H2O2 + NH4(+). It carries out the reaction pyridoxine 5'-phosphate + O2 = pyridoxal 5'-phosphate + H2O2. It participates in cofactor metabolism; pyridoxal 5'-phosphate salvage; pyridoxal 5'-phosphate from pyridoxamine 5'-phosphate: step 1/1. Its pathway is cofactor metabolism; pyridoxal 5'-phosphate salvage; pyridoxal 5'-phosphate from pyridoxine 5'-phosphate: step 1/1. In terms of biological role, catalyzes the oxidation of either pyridoxine 5'-phosphate (PNP) or pyridoxamine 5'-phosphate (PMP) into pyridoxal 5'-phosphate (PLP). In Burkholderia orbicola (strain MC0-3), this protein is Pyridoxine/pyridoxamine 5'-phosphate oxidase.